Here is a 257-residue protein sequence, read N- to C-terminus: Imidazole glycerol phosphate synthase subunit HisF (257 aa).

Catalysis depends on residues D11 and D130.

This sequence belongs to the HisA/HisF family. Heterodimer of HisH and HisF.

The protein localises to the cytoplasm. It carries out the reaction 5-[(5-phospho-1-deoxy-D-ribulos-1-ylimino)methylamino]-1-(5-phospho-beta-D-ribosyl)imidazole-4-carboxamide + L-glutamine = D-erythro-1-(imidazol-4-yl)glycerol 3-phosphate + 5-amino-1-(5-phospho-beta-D-ribosyl)imidazole-4-carboxamide + L-glutamate + H(+). It participates in amino-acid biosynthesis; L-histidine biosynthesis; L-histidine from 5-phospho-alpha-D-ribose 1-diphosphate: step 5/9. In terms of biological role, IGPS catalyzes the conversion of PRFAR and glutamine to IGP, AICAR and glutamate. The HisF subunit catalyzes the cyclization activity that produces IGP and AICAR from PRFAR using the ammonia provided by the HisH subunit. The polypeptide is Imidazole glycerol phosphate synthase subunit HisF (Aliivibrio fischeri (strain MJ11) (Vibrio fischeri)).